The primary structure comprises 174 residues: NAD(P)H-quinone oxidoreductase subunit J (174 aa).

The protein belongs to the complex I 30 kDa subunit family. NDH-1 can be composed of about 15 different subunits; different subcomplexes with different compositions have been identified which probably have different functions.

It localises to the cellular thylakoid membrane. The catalysed reaction is a plastoquinone + NADH + (n+1) H(+)(in) = a plastoquinol + NAD(+) + n H(+)(out). It catalyses the reaction a plastoquinone + NADPH + (n+1) H(+)(in) = a plastoquinol + NADP(+) + n H(+)(out). NDH-1 shuttles electrons from an unknown electron donor, via FMN and iron-sulfur (Fe-S) centers, to quinones in the respiratory and/or the photosynthetic chain. The immediate electron acceptor for the enzyme in this species is believed to be plastoquinone. Couples the redox reaction to proton translocation, and thus conserves the redox energy in a proton gradient. Cyanobacterial NDH-1 also plays a role in inorganic carbon-concentration. The polypeptide is NAD(P)H-quinone oxidoreductase subunit J (Picosynechococcus sp. (strain ATCC 27264 / PCC 7002 / PR-6) (Agmenellum quadruplicatum)).